An 865-amino-acid polypeptide reads, in one-letter code: MTIEYTKNYHHLTRIATFCALLYCNTAFSAELVEYDHTFLMGQNASNIDLSRYSEGNPAIPGVYDVSVYVNDQPIINQSITFVAIEGKKNAQACITLKNLLQFHINSPDINNEKAVLLARDETLGNCLNLTEIIPQASVRYDVNDQRLDIDVPQAWVMKNYQNYVDPSLWENGINAAMLSYNLNGYHSETPGRKNESIYAAFNGGMNLGAWRLRASGNYNWMTDSGSNYDFKNRYVQRDIASLRSQLILGESYTTGETFDSVSIRGIRLYSDSRMLPPTLASFAPIIHGVANTNAKVTITQGGYKIYETTVPPGAFVIDDLSPSGYGSDLIVTIEESDGSKRTFSQPFSSVVQMLRPGVGRWDISGGQVLKDDIQDEPNLFQASYYYGLNNYLTGYTGIQITDNNYTAGLLGLGLNTSVGAFSFDVTHSNVRIPDDKTYQGQSYRVSWNKLFEETSTSLNIAAYRYSTQNYLGLNDALTLIDEVKHPEQDLEPKSMRNYSRMKNQVTVSINQPLKFEKKDYGSFYLSGSWSDYWASGQNRSNYSIGYSNSTSWGSYSVSAQRSWNEDGDTDDSVYLSFTIPIEKLLGTEQRTSGFQSIDTQISSDFKGNNQLNVSSSGYSDNARVSYSVNTGYTMNKASKDLSYVGGYASYESPWGTLAGSISANSDNSRQVSLSTDGGFVLHSGGLTFSNDSFSDSDTLAVVQAPGAQGARINYGNSTIDRWGYGVTSALSPYHENRIALDINDLENDVELKSTSAVAVPRQGSVVFADFETVQGQSAIMNITRSDGKNIPFAADIYDEQGNVIGNVGQGGQAFVRGIEQQGNISIKWLEQSKPVSCLAHYQQSPEAEKIAQSIILNGIRCQIQ.

An N-terminal signal peptide occupies residues 1–29; sequence MTIEYTKNYHHLTRIATFCALLYCNTAFS. A disulfide bridge links Cys838 with Cys862.

The protein belongs to the fimbrial export usher family.

Its subcellular location is the cell outer membrane. In terms of biological role, part of the yadCKLM-htrE-yadVN fimbrial operon. Could contribute to adhesion to various surfaces in specific environmental niches. Probably involved in the export and assembly of fimbrial subunits across the outer membrane. The polypeptide is Outer membrane usher protein HtrE (htrE) (Escherichia coli (strain K12)).